A 123-amino-acid chain; its full sequence is Large ribosomal subunit protein uL29x (123 aa).

Belongs to the universal ribosomal protein uL29 family.

The protein is Large ribosomal subunit protein uL29x (RPL35C) of Arabidopsis thaliana (Mouse-ear cress).